The sequence spans 85 residues: MSKNIEHTMQFDLNKTKEALTKAILTEVYDSLQQKGYNPINQLVGYLISGDPTYITNYNGARALVRKLERDEILEEVIKSYLEIK.

The protein belongs to the UPF0297 family.

In Clostridium botulinum (strain Eklund 17B / Type B), this protein is UPF0297 protein CLL_A1175.